Reading from the N-terminus, the 244-residue chain is 1-(5-phosphoribosyl)-5-[(5-phosphoribosylamino)methylideneamino] imidazole-4-carboxamide isomerase (244 aa).

Asp15 functions as the Proton acceptor in the catalytic mechanism. Asp136 acts as the Proton donor in catalysis.

The protein belongs to the HisA/HisF family.

Its subcellular location is the cytoplasm. The catalysed reaction is 1-(5-phospho-beta-D-ribosyl)-5-[(5-phospho-beta-D-ribosylamino)methylideneamino]imidazole-4-carboxamide = 5-[(5-phospho-1-deoxy-D-ribulos-1-ylimino)methylamino]-1-(5-phospho-beta-D-ribosyl)imidazole-4-carboxamide. The protein operates within amino-acid biosynthesis; L-histidine biosynthesis; L-histidine from 5-phospho-alpha-D-ribose 1-diphosphate: step 4/9. The polypeptide is 1-(5-phosphoribosyl)-5-[(5-phosphoribosylamino)methylideneamino] imidazole-4-carboxamide isomerase (Dehalococcoides mccartyi (strain CBDB1)).